We begin with the raw amino-acid sequence, 143 residues long: Putative transmembrane protein ORF32 (143 aa).

2 helical membrane passes run 20–42 and 52–74; these read GISG…SFTL and WPLI…EGGV.

The protein resides in the host membrane. The sequence is that of Putative transmembrane protein ORF32 from Haloarcula hispanica (His1V).